The following is a 481-amino-acid chain: Mechanosensory protein 2 (481 aa).

Over residues 1–22 (MSATMSSARNSVVSLSSNGSVK) the composition is skewed to low complexity. 2 disordered regions span residues 1–67 (MSAT…MATR) and 80–104 (SANS…GNGK). The segment covering 27 to 38 (LVSNERSSSIQQ) has biased composition (polar residues). A compositionally biased stretch (basic and acidic residues) spans 86–104 (DSVKKEKQAEKDVEKGNGK). A helical membrane pass occupies residues 115-135 (GVCGWILTILSYLLIFFTLPI). Gly residues predominate over residues 403-421 (EGGGGHGHSHGGGGGGLGS). The segment at 403–481 (EGGGGHGHSH…SQLDPALLIR (79 aa)) is disordered. Residues 433-447 (SGPSTTTTSGRPLLR) show a composition bias toward low complexity. Over residues 463 to 473 (APNQSQTSVSQ) the composition is skewed to polar residues.

The protein belongs to the band 7/mec-2 family. In terms of assembly, component of a non-voltage-gated amiloride-sensitive cation channel complex (also called the degenerin channel complex) composed of at least the mec-2, mec-4, mec-6 and mec-10 subunits; the complex mediates mechanotransduction in touch cells. Interacts with mec-6 and mec-4.

The protein resides in the membrane. In terms of biological role, subunit of an amiloride-sensitive cation channel (degenerin channel complex) permeable for sodium, potassium, lithium and N-methylglucamine, and required for mechanosensory transduction (touch sensitivity). Positively regulates the activity of the putative mechanosensory transduction channel. May link the mechanosensory channel and the microtubule cytoskeleton of the touch receptor neurons. Required for the function of a set of six touch receptor neurons. In Caenorhabditis elegans, this protein is Mechanosensory protein 2.